Reading from the N-terminus, the 485-residue chain is Amidophosphoribosyltransferase, chloroplastic (485 aa).

A chloroplast-targeting transit peptide spans K1 to E18. C19 acts as the Nucleophile in catalysis. The region spanning C19–T237 is the Glutamine amidotransferase type-2 domain. Residue C253 coordinates [4Fe-4S] cluster. Mg(2+) is bound by residues S300, D362, and D363. Residues C399, C450, and C453 each coordinate [4Fe-4S] cluster.

In the C-terminal section; belongs to the purine/pyrimidine phosphoribosyltransferase family. Requires Mg(2+) as cofactor. [4Fe-4S] cluster is required as a cofactor.

Its subcellular location is the plastid. The protein localises to the chloroplast. The enzyme catalyses 5-phospho-beta-D-ribosylamine + L-glutamate + diphosphate = 5-phospho-alpha-D-ribose 1-diphosphate + L-glutamine + H2O. The protein operates within purine metabolism; IMP biosynthesis via de novo pathway; N(1)-(5-phospho-D-ribosyl)glycinamide from 5-phospho-alpha-D-ribose 1-diphosphate: step 1/2. The chain is Amidophosphoribosyltransferase, chloroplastic (PUR1) from Vigna aconitifolia (Moth bean).